Reading from the N-terminus, the 374-residue chain is S-adenosylmethionine:tRNA ribosyltransferase-isomerase (374 aa).

The protein belongs to the QueA family. Monomer.

The protein localises to the cytoplasm. It carries out the reaction 7-aminomethyl-7-carbaguanosine(34) in tRNA + S-adenosyl-L-methionine = epoxyqueuosine(34) in tRNA + adenine + L-methionine + 2 H(+). It participates in tRNA modification; tRNA-queuosine biosynthesis. Functionally, transfers and isomerizes the ribose moiety from AdoMet to the 7-aminomethyl group of 7-deazaguanine (preQ1-tRNA) to give epoxyqueuosine (oQ-tRNA). The chain is S-adenosylmethionine:tRNA ribosyltransferase-isomerase from Prochlorococcus marinus (strain MIT 9301).